A 460-amino-acid chain; its full sequence is Ribulose bisphosphate carboxylase large chain (460 aa).

K4 carries the post-translational modification N6,N6,N6-trimethyllysine. Residues N113 and T163 each contribute to the substrate site. K165 (proton acceptor) is an active-site residue. K167 provides a ligand contact to substrate. Residues K191, D193, and E194 each coordinate Mg(2+). Residue K191 is modified to N6-carboxylysine. The active-site Proton acceptor is the H284. Residues R285, H317, and S369 each contribute to the substrate site.

This sequence belongs to the RuBisCO large chain family. Type I subfamily. In terms of assembly, heterohexadecamer of 8 large chains and 8 small chains. The cofactor is Mg(2+).

The protein resides in the plastid. It is found in the chloroplast. The catalysed reaction is 2 (2R)-3-phosphoglycerate + 2 H(+) = D-ribulose 1,5-bisphosphate + CO2 + H2O. It carries out the reaction D-ribulose 1,5-bisphosphate + O2 = 2-phosphoglycolate + (2R)-3-phosphoglycerate + 2 H(+). Its function is as follows. RuBisCO catalyzes two reactions: the carboxylation of D-ribulose 1,5-bisphosphate, the primary event in carbon dioxide fixation, as well as the oxidative fragmentation of the pentose substrate in the photorespiration process. Both reactions occur simultaneously and in competition at the same active site. This chain is Ribulose bisphosphate carboxylase large chain, found in Cunninghamia lanceolata (China fir).